The chain runs to 172 residues: 3-hydroxydecanoyl-[acyl-carrier-protein] dehydratase (172 aa).

Histidine 71 is an active-site residue.

It belongs to the thioester dehydratase family. FabA subfamily. As to quaternary structure, homodimer.

It localises to the cytoplasm. The catalysed reaction is a (3R)-hydroxyacyl-[ACP] = a (2E)-enoyl-[ACP] + H2O. It catalyses the reaction (3R)-hydroxydecanoyl-[ACP] = (2E)-decenoyl-[ACP] + H2O. The enzyme catalyses (2E)-decenoyl-[ACP] = (3Z)-decenoyl-[ACP]. It functions in the pathway lipid metabolism; fatty acid biosynthesis. In terms of biological role, necessary for the introduction of cis unsaturation into fatty acids. Catalyzes the dehydration of (3R)-3-hydroxydecanoyl-ACP to E-(2)-decenoyl-ACP and then its isomerization to Z-(3)-decenoyl-ACP. Can catalyze the dehydratase reaction for beta-hydroxyacyl-ACPs with saturated chain lengths up to 16:0, being most active on intermediate chain length. In Escherichia coli O6:K15:H31 (strain 536 / UPEC), this protein is 3-hydroxydecanoyl-[acyl-carrier-protein] dehydratase.